A 442-amino-acid chain; its full sequence is tRNA(Ile)-lysidine synthase (442 aa).

Residue 28 to 33 (SGGLDS) participates in ATP binding.

The protein belongs to the tRNA(Ile)-lysidine synthase family.

The protein localises to the cytoplasm. The enzyme catalyses cytidine(34) in tRNA(Ile2) + L-lysine + ATP = lysidine(34) in tRNA(Ile2) + AMP + diphosphate + H(+). In terms of biological role, ligates lysine onto the cytidine present at position 34 of the AUA codon-specific tRNA(Ile) that contains the anticodon CAU, in an ATP-dependent manner. Cytidine is converted to lysidine, thus changing the amino acid specificity of the tRNA from methionine to isoleucine. In Pseudomonas aeruginosa (strain ATCC 15692 / DSM 22644 / CIP 104116 / JCM 14847 / LMG 12228 / 1C / PRS 101 / PAO1), this protein is tRNA(Ile)-lysidine synthase.